Reading from the N-terminus, the 307-residue chain is MLAQRTLKSLTKAVGVGLHSGQRVELTLRPAPPDSGIVFRRVDLPEPVDIVISPEAVTDTRLASTISSGSAKVHTVEHLMSACAGLGLDNLIIDITAEEVPILDGSASSFVFLLQSAGIALQDAPKRFVRILKPVEVREGEGANVKWARLSPYEGYKLSFEIDFDHPAVDSTGQRVEFDMGSGGYSRDIARARTFGFTKDVEMMRANGLALGGGLDNAIVMDDYKVLNSEGLRYNDEFVKHKILDAMGDLYLLGKPLLAAYSAFRSGHAMNNKLLRELQAHPEAYEIVTFDDEKSAPKGFSTLPRAW.

His-78, His-241, and Asp-245 together coordinate Zn(2+). The active-site Proton donor is the His-268.

Belongs to the LpxC family. The cofactor is Zn(2+).

It catalyses the reaction a UDP-3-O-[(3R)-3-hydroxyacyl]-N-acetyl-alpha-D-glucosamine + H2O = a UDP-3-O-[(3R)-3-hydroxyacyl]-alpha-D-glucosamine + acetate. The protein operates within glycolipid biosynthesis; lipid IV(A) biosynthesis; lipid IV(A) from (3R)-3-hydroxytetradecanoyl-[acyl-carrier-protein] and UDP-N-acetyl-alpha-D-glucosamine: step 2/6. Its function is as follows. Catalyzes the hydrolysis of UDP-3-O-myristoyl-N-acetylglucosamine to form UDP-3-O-myristoylglucosamine and acetate, the committed step in lipid A biosynthesis. This is UDP-3-O-acyl-N-acetylglucosamine deacetylase from Polaromonas naphthalenivorans (strain CJ2).